The following is a 64-amino-acid chain: Prokaryotic ubiquitin-like protein UBact (64 aa).

Positions 1–64 are disordered; it reads MFNGEEVILF…SERYRQRTGE (64 aa). Residues 22 to 64 show a composition bias toward basic and acidic residues; that stretch reads REIHKDAPAPKRPETKKTGDRLMDRMKKVDPNQSERYRQRTGE. Residue Glu-64 forms an Isoglutamyl lysine isopeptide (Glu-Lys) (interchain with K-? in acceptor proteins) linkage.

The protein belongs to the ubiquitin-like protein UBact family.

May function as a protein modifier covalently attached to lysine residues of substrate proteins. This may serve to target the modified proteins for degradation by proteasomes. This is Prokaryotic ubiquitin-like protein UBact from Leptospirillum ferriphilum (strain ML-04).